Here is an 821-residue protein sequence, read N- to C-terminus: Xylosyltransferase 1 (821 aa).

A disordered region spans residues 1–121 (YFSHRPKEKV…PETKSDQVPK (121 aa)). Residues 1–821 (YFSHRPKEKV…GAVKPDGRLR (821 aa)) lie on the Lumenal side of the membrane. The span at 9-25 (KVRTDSNNENSVPKDFE) shows a compositional bias: basic and acidic residues. Positions 27-36 (VDNSNFAPRT) are enriched in polar residues. Basic and acidic residues-rich tracts occupy residues 41–58 (HQPE…ERLQ) and 76–87 (GPKEVLPPREKA). The N-linked (GlcNAc...) asparagine glycan is linked to asparagine 90. Cystine bridges form between cysteine 122-cysteine 150, cysteine 166-cysteine 407, cysteine 426-cysteine 439, and cysteine 428-cysteine 437. Residues valine 198, aspartate 226, and 255–257 (TIW) each bind UDP-alpha-D-xylose. An N-linked (GlcNAc...) asparagine glycan is attached at asparagine 286. A UDP-alpha-D-xylose-binding site is contributed by 359–360 (DW). Residues serine 440 and 463-464 (RK) contribute to the UDP-alpha-D-xylose site. 2 disulfide bridges follow: cysteine 540–cysteine 789 and cysteine 782–cysteine 795. An N-linked (GlcNAc...) asparagine glycan is attached at asparagine 642. The disordered stretch occupies residues 801 to 821 (SSFSPDPKSELGAVKPDGRLR).

The protein belongs to the glycosyltransferase 14 family. XylT subfamily. In terms of assembly, monomer. A divalent metal cation serves as cofactor. Contains 7 disulfide bonds. In terms of processing, N-glycosylated.

It is found in the golgi apparatus membrane. The enzyme catalyses UDP-alpha-D-xylose + L-seryl-[protein] = 3-O-(beta-D-xylosyl)-L-seryl-[protein] + UDP + H(+). The protein operates within glycan metabolism; chondroitin sulfate biosynthesis. It functions in the pathway glycan metabolism; heparan sulfate biosynthesis. In terms of biological role, catalyzes the first step in the biosynthesis of chondroitin sulfate and dermatan sulfate proteoglycans, such as DCN. Transfers D-xylose from UDP-D-xylose to specific serine residues of the core protein. Required for normal maturation of chondrocytes during bone development, normal onset of ossification and normal embryonic and postnatal skeleton development, especially of the long bones. In Rattus norvegicus (Rat), this protein is Xylosyltransferase 1 (Xylt1).